We begin with the raw amino-acid sequence, 242 residues long: Sec-independent protein translocase protein TatCd (242 aa).

The next 3 membrane-spanning stretches (helical) occupy residues 19-39 (IIVTLAAFFLFLITAFLFVQD), 60-80 (ILWVYMMLSGICAIAASIPVA), and 107-127 (LFALFLAGISFGYFVLFPIVL). The interaction with TatAd stretch occupies residues 128 to 149 (SFLTHLSSGHFETMFTADRYFR). The chain crosses the membrane as a helical span at residues 150 to 170 (FMVNLSLPFGFLFEMPLVVMF). Positions 171–187 (LTRLGILNPYRLAKARK) are interaction with TatAd. 2 helical membrane passes run 188 to 208 (LSYFLLIVVSILITPPDFISD) and 209 to 229 (FLVMIPLLVLFEVSVTLSAFV).

This sequence belongs to the TatC family. As to quaternary structure, forms a complex with TatAd. Two types of complexes exist: one composed of TatAd and TatCd, and another composed only of TatAd.

It is found in the cell membrane. Its function is as follows. Part of the twin-arginine translocation (Tat) system that transports large folded proteins containing a characteristic twin-arginine motif in their signal peptide across membranes. Required for PhoD secretion. TatCd promotes membrane localization of TatAd via domain specific interactions. TatCd is required for stabile production of TatAd as well as for its maintenance. The sequence is that of Sec-independent protein translocase protein TatCd from Bacillus subtilis (strain 168).